We begin with the raw amino-acid sequence, 464 residues long: Trigger factor (464 aa).

The PPIase FKBP-type domain maps to 162-243 (GDFISIDLSA…VGTVKERELP (82 aa)). Residues 435 to 464 (ELFGNGEAETEEAASTDEAASDSTESEDQK) form a disordered region.

This sequence belongs to the FKBP-type PPIase family. Tig subfamily.

It is found in the cytoplasm. It carries out the reaction [protein]-peptidylproline (omega=180) = [protein]-peptidylproline (omega=0). Its function is as follows. Involved in protein export. Acts as a chaperone by maintaining the newly synthesized protein in an open conformation. Functions as a peptidyl-prolyl cis-trans isomerase. This is Trigger factor from Rhodococcus jostii (strain RHA1).